The primary structure comprises 131 residues: uncharacterized protein (131 aa).

Residues 26-124 (CSVEVAVNEI…WGKMYGSHQE (99 aa)) enclose the HTH hxlR-type domain.

This is an uncharacterized protein from Methanothermobacter thermautotrophicus (strain ATCC 29096 / DSM 1053 / JCM 10044 / NBRC 100330 / Delta H) (Methanobacterium thermoautotrophicum).